A 139-amino-acid polypeptide reads, in one-letter code: Glutamate mutase sigma subunit (139 aa).

The B12-binding domain maps to 4–139 (KIKLVLGVIG…DLHADFPDHA (136 aa)). Adenosylcob(III)alamin contacts are provided by residues 14-18 (SDCHA), His17, 62-64 (SSL), and 94-98 (NIVVG).

It belongs to the methylaspartate mutase GlmS subunit family. As to quaternary structure, heterotetramer composed of 2 epsilon subunits (GlmE) and 2 sigma subunits (GlmS). GlmE exists as a homodimer and GlmS as a monomer. It depends on adenosylcob(III)alamin as a cofactor.

The enzyme catalyses (2S,3S)-3-methyl-L-aspartate = L-glutamate. Its pathway is amino-acid degradation; L-glutamate degradation via mesaconate pathway; acetate and pyruvate from L-glutamate: step 1/4. Its function is as follows. Catalyzes the carbon skeleton rearrangement of L-glutamate to L-threo-3-methylaspartate ((2S,3S)-3-methylaspartate). The polypeptide is Glutamate mutase sigma subunit (Treponema denticola (strain ATCC 35405 / DSM 14222 / CIP 103919 / JCM 8153 / KCTC 15104)).